Here is a 583-residue protein sequence, read N- to C-terminus: Arginine--tRNA ligase (583 aa).

Positions 121-131 (ANPTGPLHLGH) match the 'HIGH' region motif.

This sequence belongs to the class-I aminoacyl-tRNA synthetase family. In terms of assembly, monomer.

Its subcellular location is the cytoplasm. It catalyses the reaction tRNA(Arg) + L-arginine + ATP = L-arginyl-tRNA(Arg) + AMP + diphosphate. This chain is Arginine--tRNA ligase (argS), found in Aquifex aeolicus (strain VF5).